A 153-amino-acid chain; its full sequence is Protein-export protein SecB (153 aa).

It belongs to the SecB family. As to quaternary structure, homotetramer, a dimer of dimers. One homotetramer interacts with 1 SecA dimer.

The protein localises to the cytoplasm. In terms of biological role, one of the proteins required for the normal export of preproteins out of the cell cytoplasm. It is a molecular chaperone that binds to a subset of precursor proteins, maintaining them in a translocation-competent state. It also specifically binds to its receptor SecA. The chain is Protein-export protein SecB from Edwardsiella ictaluri (strain 93-146).